An 875-amino-acid chain; its full sequence is Ectonucleotide pyrophosphatase/phosphodiesterase family member 3 (875 aa).

The Cytoplasmic segment spans residues 1-11; that stretch reads MDSRLALATEE. A helical; Signal-anchor for type II membrane protein membrane pass occupies residues 12-30; that stretch reads PIKKDSLKRYKILCAVLLA. The Extracellular portion of the chain corresponds to 31-875; that stretch reads LLVIVSLGLG…TYLPTFETII (845 aa). SMB domains follow at residues 51-94 and 95-139; these read HIGS…VKST and QIWT…GEVP. 10 disulfide bridges follow: Cys55/Cys72, Cys59/Cys90, Cys70/Cys83, Cys76/Cys82, Cys99/Cys116, Cys104/Cys134, Cys114/Cys127, Cys120/Cys126, Cys145/Cys191, and Cys153/Cys365. The Cell attachment site signature appears at 79 to 81; the sequence is RGD. Residues 161 to 545 are phosphodiesterase; the sequence is PVILFSMDGF…HGSLNHLLKA (385 aa). Residue Asp168 coordinates Zn(2+). ATP is bound at residue Lys205. Thr206 is a Zn(2+) binding site. The active-site Nucleophile is the Thr206. Asn227 is an ATP binding site. Asn237 carries an N-linked (GlcNAc...) asparagine glycan. An ATP-binding site is contributed by Asp276. Asn280 and Asn289 each carry an N-linked (GlcNAc...) asparagine glycan. Tyr290 serves as a coordination point for ATP. The Zn(2+) site is built by Asp326, His330, Asp373, and His374. 6 disulfide bridges follow: Cys381-Cys478, Cys429-Cys818, Cys562-Cys623, Cys575-Cys679, Cys577-Cys664, and Cys787-Cys797. His483 contacts Zn(2+). Residues Asn533, Asn574, Asn594, and Asn702 are each glycosylated (N-linked (GlcNAc...) asparagine). The nuclease stretch occupies residues 582-875; it reads TSGQEEQVNQ…TYLPTFETII (294 aa). Asp752, Asn754, Asp756, His758, and Asp760 together coordinate Ca(2+). Asn789 carries N-linked (GlcNAc...) asparagine glycosylation.

The protein belongs to the nucleotide pyrophosphatase/phosphodiesterase family. As to quaternary structure, monomer and homodimer. It depends on Zn(2+) as a cofactor. In terms of processing, the N-terminal is blocked. N-glycosylated. N-glycosylation is necessary for normal transport to the cell membrane, but is not the apical targeting signal. As to expression, detected in intestinal epithelium and liver (at protein level).

It is found in the cell membrane. Its subcellular location is the apical cell membrane. The protein localises to the secreted. It carries out the reaction Hydrolytically removes 5'-nucleotides successively from the 3'-hydroxy termini of 3'-hydroxy-terminated oligonucleotides.. The catalysed reaction is a ribonucleoside 5'-triphosphate + H2O = a ribonucleoside 5'-phosphate + diphosphate + H(+). The enzyme catalyses ATP + H2O = AMP + diphosphate + H(+). It catalyses the reaction CTP + H2O = CMP + diphosphate + H(+). It carries out the reaction GTP + H2O = GMP + diphosphate + H(+). The catalysed reaction is UTP + H2O = UMP + diphosphate + H(+). The enzyme catalyses UDP-N-acetyl-alpha-D-glucosamine + H2O = N-acetyl-alpha-D-glucosamine 1-phosphate + UMP + 2 H(+). It catalyses the reaction P(1),P(3)-bis(5'-adenosyl) triphosphate + H2O = AMP + ADP + 2 H(+). It carries out the reaction P(1),P(4)-bis(5'-adenosyl) tetraphosphate + H2O = AMP + ATP + 2 H(+). The catalysed reaction is P(1),P(5)-bis(5'-adenosyl) pentaphosphate + H2O = adenosine 5'-tetraphosphate + AMP + 2 H(+). The enzyme catalyses P(1),P(4)-bis(5'-guanosyl) tetraphosphate + H2O = GMP + GTP + 2 H(+). In terms of biological role, hydrolase that metabolizes extracellular nucleotides, including ATP, GTP, UTP and CTP. Limits mast cells and basophils response during inflammation and during the chronic phases of allergic responses by eliminating extracellular ATP, a signaling molecule activating these cells in an autocrine manner. Metabolizes extracellular ATP in the lumen of the small intestine, and thereby prevents ATP-induced apoptosis of intestinal plasmacytoid dendritic cells. Has a broad specificity and can also hydrolyze UDP-GlcNAc into UMP and GlcNAc-1-phosphate and potentially several other intracellular nucleotide sugars, including UDP-GalNAc, CMP-NeuAc, GDP-Fuc, and UDP-GlcA. Thereby, could modulate glycan biosynthesis and protein glycosylation. Can hydrolyze extracellular dinucleoside polyphosphates, including the vasoactive adenosine polyphosphates as well. In addition, displays an alkaline phosphodiesterase activity in vitro. The protein is Ectonucleotide pyrophosphatase/phosphodiesterase family member 3 of Rattus norvegicus (Rat).